Consider the following 793-residue polypeptide: DnaJ homolog subfamily C member 10 (793 aa).

A signal peptide spans 1–32 (MGVWLNKDDYIRDLKRIILCFLIVYMAILVGT). One can recognise a J domain in the interval 35 to 100 (DFYSLLGVSK…DLRKKYDKYG (66 aa)). Residues 130-232 (EIITLERREF…ESLVSFAMQH (103 aa)) enclose the Thioredoxin 1 domain. C158 and C161 are oxidised to a cystine. Trxb stretches follow at residues 235-350 (STVT…LPDF) and 348-463 (PDFE…PQNF). Thioredoxin domains are found at residues 454–553 (HVTT…IEDL), 557–662 (SVVS…SLRI), and 671–778 (VSTD…ISEK). An intrachain disulfide couples C480 to C483. N530 is a glycosylation site (N-linked (GlcNAc...) asparagine). Cystine bridges form between C588-C591 and C700-C703. Positions 790-793 (KDEL) match the Prevents secretion from ER motif.

Interacts with EDEM1. Interacts with HSPA5 (via its J domain).

It localises to the endoplasmic reticulum lumen. Endoplasmic reticulum disulfide reductase involved both in the correct folding of proteins and degradation of misfolded proteins. Required for efficient folding of proteins in the endoplasmic reticulum by catalyzing the removal of non-native disulfide bonds formed during the folding of proteins, such as LDLR. Also involved in endoplasmic reticulum-associated degradation (ERAD) by reducing incorrect disulfide bonds in misfolded glycoproteins recognized by EDEM1. Interaction with HSPA5 is required its activity, not for the disulfide reductase activity, but to facilitate the release of DNAJC10 from its substrate. Promotes apoptotic signaling pathway in response to endoplasmic reticulum stress. This Homo sapiens (Human) protein is DnaJ homolog subfamily C member 10 (DNAJC10).